We begin with the raw amino-acid sequence, 212 residues long: Imidazole glycerol phosphate synthase subunit HisH (212 aa).

The Glutamine amidotransferase type-1 domain maps to 1–212 (MLAILDYKAG…YAYCKEASRA (212 aa)). Cys-79 serves as the catalytic Nucleophile. Residues His-187 and Glu-189 contribute to the active site.

Heterodimer of HisH and HisF.

Its subcellular location is the cytoplasm. It catalyses the reaction 5-[(5-phospho-1-deoxy-D-ribulos-1-ylimino)methylamino]-1-(5-phospho-beta-D-ribosyl)imidazole-4-carboxamide + L-glutamine = D-erythro-1-(imidazol-4-yl)glycerol 3-phosphate + 5-amino-1-(5-phospho-beta-D-ribosyl)imidazole-4-carboxamide + L-glutamate + H(+). The catalysed reaction is L-glutamine + H2O = L-glutamate + NH4(+). It functions in the pathway amino-acid biosynthesis; L-histidine biosynthesis; L-histidine from 5-phospho-alpha-D-ribose 1-diphosphate: step 5/9. Functionally, IGPS catalyzes the conversion of PRFAR and glutamine to IGP, AICAR and glutamate. The HisH subunit catalyzes the hydrolysis of glutamine to glutamate and ammonia as part of the synthesis of IGP and AICAR. The resulting ammonia molecule is channeled to the active site of HisF. This chain is Imidazole glycerol phosphate synthase subunit HisH, found in Nitratidesulfovibrio vulgaris (strain DSM 19637 / Miyazaki F) (Desulfovibrio vulgaris).